Consider the following 389-residue polypeptide: Mitochondrial carrier homolog 1 (389 aa).

Residues 1 to 78 form a disordered region; that stretch reads MGASDPEVAP…PGAPGSGDNA (78 aa). The Mitochondrial intermembrane portion of the chain corresponds to 1-93; the sequence is MGASDPEVAP…LFVALGAGVT (93 aa). A compositionally biased stretch (gly residues) spans 15 to 33; sequence GAAGMAGAGAGAGARGGAP. Arg29 is subject to Omega-N-methylarginine. 2 Solcar repeats span residues 81 to 176 and 192 to 280; these read TEAL…FPPD and KKVV…INAY. Residues 94–104 traverse the membrane as a helical segment; the sequence is ALSHPLLYVKL. At 105–155 the chain is on the cytoplasmic side; that stretch reads LIQVGHEPMPPTLGTNVLGRKVLYLPSFFTYAKYIVQVDGKIGLFRGLSPR. The helical transmembrane segment at 156–176 threads the bilayer; sequence LMSNALSTVTRGSMKKVFPPD. The Mitochondrial intermembrane segment spans residues 177–209; it reads EMEQVSNKDDMKTSLKKVVKETSYEMMMQCVSR. The chain crosses the membrane as a helical span at residues 210–229; it reads MLAHPLHVISMRCMVQFVGR. Residues 230 to 254 lie on the Cytoplasmic side of the membrane; the sequence is EAKYSGVLSSIGKIFKEEGLLGFFV. A helical transmembrane segment spans residues 255 to 279; it reads GLIPHLLGDVVFLWGCNLLAHFINA. Topologically, residues 280–322 are mitochondrial intermembrane; sequence YLVDDSVSDTPGGLGNDQNPGSQFSQALAIRSYTKFVMGIAVS. Residues 323-342 traverse the membrane as a helical segment; it reads MLTYPFLLVGDLMAVNNCGL. The Cytoplasmic portion of the chain corresponds to 343 to 371; the sequence is RAGLPPYSPVFKSWIHCWKYLSVQGQLFR. Residues 372 to 389 traverse the membrane as a helical segment; the sequence is GSSLLFRRVSSGSCFALE.

This sequence belongs to the mitochondrial carrier (TC 2.A.29) family. As to quaternary structure, interacts with PSEN1.

Its subcellular location is the mitochondrion outer membrane. Functionally, protein insertase that mediates insertion of transmembrane proteins into the mitochondrial outer membrane. Catalyzes insertion of proteins with alpha-helical transmembrane regions, such as signal-anchored, tail-anchored and multi-pass membrane proteins. Does not mediate insertion of beta-barrel transmembrane proteins. May play a role in apoptosis. This chain is Mitochondrial carrier homolog 1 (Mtch1), found in Mus musculus (Mouse).